The primary structure comprises 213 residues: Cytochrome b6 (213 aa).

A helical transmembrane segment spans residues 30–50; sequence IFFCLGGLTLLCFIVQCLTGI. Residue cysteine 33 coordinates heme c. Histidine 84 and histidine 98 together coordinate heme b. A run of 3 helical transmembrane segments spans residues 88-108, 114-134, and 184-204; these read CQLM…TGAF, LNWV…FTGY, and LHVM…FIMI. Histidine 185 and histidine 200 together coordinate heme b.

It belongs to the cytochrome b family. PetB subfamily. As to quaternary structure, the subunits of the cytochrome bc complex are a Rieske Fe-S protein (PetC), cytochrome b6 (PetB), subunit IV (PetD), and a diheme cytochrome c (PetX). It depends on heme b as a cofactor. The cofactor is heme c.

It is found in the cell membrane. Component of the cytochrome bc complex which donates electrons to the photosynthetic reaction center. This Heliomicrobium gestii (Heliobacterium gestii) protein is Cytochrome b6.